The following is a 235-amino-acid chain: Probable transcriptional regulatory protein Ccur92_05350 (235 aa).

The protein belongs to the TACO1 family.

Its subcellular location is the cytoplasm. This is Probable transcriptional regulatory protein Ccur92_05350 from Campylobacter curvus (strain 525.92).